Here is a 192-residue protein sequence, read N- to C-terminus: Xanthine phosphoribosyltransferase (192 aa).

Leu20 and Asn27 together coordinate xanthine. Ala128–Ala132 contacts 5-phospho-alpha-D-ribose 1-diphosphate. Lys156 contributes to the xanthine binding site.

Belongs to the purine/pyrimidine phosphoribosyltransferase family. Xpt subfamily. Homodimer.

It is found in the cytoplasm. It catalyses the reaction XMP + diphosphate = xanthine + 5-phospho-alpha-D-ribose 1-diphosphate. It functions in the pathway purine metabolism; XMP biosynthesis via salvage pathway; XMP from xanthine: step 1/1. Converts the preformed base xanthine, a product of nucleic acid breakdown, to xanthosine 5'-monophosphate (XMP), so it can be reused for RNA or DNA synthesis. This chain is Xanthine phosphoribosyltransferase, found in Agathobacter rectalis (strain ATCC 33656 / DSM 3377 / JCM 17463 / KCTC 5835 / VPI 0990) (Eubacterium rectale).